The chain runs to 110 residues: Large ribosomal subunit protein uL22 (110 aa).

This sequence belongs to the universal ribosomal protein uL22 family. As to quaternary structure, part of the 50S ribosomal subunit.

In terms of biological role, this protein binds specifically to 23S rRNA; its binding is stimulated by other ribosomal proteins, e.g. L4, L17, and L20. It is important during the early stages of 50S assembly. It makes multiple contacts with different domains of the 23S rRNA in the assembled 50S subunit and ribosome. Its function is as follows. The globular domain of the protein is located near the polypeptide exit tunnel on the outside of the subunit, while an extended beta-hairpin is found that lines the wall of the exit tunnel in the center of the 70S ribosome. The protein is Large ribosomal subunit protein uL22 of Marinobacter nauticus (strain ATCC 700491 / DSM 11845 / VT8) (Marinobacter aquaeolei).